An 87-amino-acid chain; its full sequence is Cell division protein ZapA (87 aa).

Positions 64-87 (VHDYIKLKEEYDRLLQKLHKEKDE) form a coiled coil.

The protein belongs to the ZapA family. Type 2 subfamily. In terms of assembly, homodimer. Interacts with FtsZ.

The protein resides in the cytoplasm. Functionally, activator of cell division through the inhibition of FtsZ GTPase activity, therefore promoting FtsZ assembly into bundles of protofilaments necessary for the formation of the division Z ring. It is recruited early at mid-cell but it is not essential for cell division. The polypeptide is Cell division protein ZapA (Geobacillus sp. (strain WCH70)).